The following is a 149-amino-acid chain: Nucleoside diphosphate kinase (149 aa).

Positions 9, 57, 85, 91, 102, and 112 each coordinate ATP. The Pros-phosphohistidine intermediate role is filled by His115.

This sequence belongs to the NDK family. Homotetramer. It depends on Mg(2+) as a cofactor.

The protein localises to the cytoplasm. The catalysed reaction is a 2'-deoxyribonucleoside 5'-diphosphate + ATP = a 2'-deoxyribonucleoside 5'-triphosphate + ADP. The enzyme catalyses a ribonucleoside 5'-diphosphate + ATP = a ribonucleoside 5'-triphosphate + ADP. Its function is as follows. Major role in the synthesis of nucleoside triphosphates other than ATP. The ATP gamma phosphate is transferred to the NDP beta phosphate via a ping-pong mechanism, using a phosphorylated active-site intermediate. The polypeptide is Nucleoside diphosphate kinase (Trichodesmium erythraeum (strain IMS101)).